Here is a 101-residue protein sequence, read N- to C-terminus: Small ribosomal subunit protein bS18c (101 aa).

This sequence belongs to the bacterial ribosomal protein bS18 family. Part of the 30S ribosomal subunit.

The protein resides in the plastid. It is found in the chloroplast. The chain is Small ribosomal subunit protein bS18c from Solanum bulbocastanum (Wild potato).